A 261-amino-acid polypeptide reads, in one-letter code: Enolase-phosphatase E1 (261 aa).

2 residues coordinate Mg(2+): Asp16 and Glu18. Substrate-binding positions include 153-154 and Lys187; that span reads SS. A Mg(2+)-binding site is contributed by Asp212.

This sequence belongs to the HAD-like hydrolase superfamily. MasA/MtnC family. Monomer. It depends on Mg(2+) as a cofactor.

It is found in the cytoplasm. The protein resides in the nucleus. It catalyses the reaction 5-methylsulfanyl-2,3-dioxopentyl phosphate + H2O = 1,2-dihydroxy-5-(methylsulfanyl)pent-1-en-3-one + phosphate. Its pathway is amino-acid biosynthesis; L-methionine biosynthesis via salvage pathway; L-methionine from S-methyl-5-thio-alpha-D-ribose 1-phosphate: step 3/6. The protein operates within amino-acid biosynthesis; L-methionine biosynthesis via salvage pathway; L-methionine from S-methyl-5-thio-alpha-D-ribose 1-phosphate: step 4/6. In terms of biological role, bifunctional enzyme that catalyzes the enolization of 2,3-diketo-5-methylthiopentyl-1-phosphate (DK-MTP-1-P) into the intermediate 2-hydroxy-3-keto-5-methylthiopentenyl-1-phosphate (HK-MTPenyl-1-P), which is then dephosphorylated to form the acireductone 1,2-dihydroxy-3-keto-5-methylthiopentene (DHK-MTPene). The protein is Enolase-phosphatase E1 (enoph1) of Salmo salar (Atlantic salmon).